A 559-amino-acid polypeptide reads, in one-letter code: Polypeptide N-acetylgalactosaminyltransferase 1 (559 aa).

Residues 1 to 8 are Cytoplasmic-facing; the sequence is MRKFAYCK. Residues 9–28 form a helical; Signal-anchor for type II membrane protein membrane-spanning segment; it reads VVLATSLIWVLLDMFLLLYF. Over 29 to 559 the chain is Lumenal; the sequence is SECNKCDEKK…LRNVTLPEIF (531 aa). The disordered stretch occupies residues 45-66; the sequence is GDVLEPVQKPHEGPGEMGKPVV. Residue asparagine 95 is glycosylated (N-linked (GlcNAc...) asparagine). Disulfide bonds link cysteine 106–cysteine 339, cysteine 330–cysteine 408, cysteine 442–cysteine 459, cysteine 482–cysteine 497, and cysteine 523–cysteine 540. The tract at residues 115-225 is catalytic subdomain A; sequence LPTTSVVIVF…VGWLEPLLAR (111 aa). Substrate is bound by residues aspartate 156 and arginine 186. Residues aspartate 209 and histidine 211 each coordinate Mn(2+). Residues 285 to 347 form a catalytic subdomain B region; it reads PVRTPTMAGG…TCSHVGHVFR (63 aa). Tryptophan 316 lines the substrate pocket. Mn(2+) is bound at residue histidine 344. Substrate is bound by residues arginine 347 and tyrosine 352. Residues 429-551 form the Ricin B-type lectin domain; that stretch reads SSLGEIRNVE…GSRSQQWLLR (123 aa). Residue asparagine 552 is glycosylated (N-linked (GlcNAc...) asparagine).

This sequence belongs to the glycosyltransferase 2 family. GalNAc-T subfamily. Mn(2+) is required as a cofactor.

The protein resides in the golgi apparatus. It localises to the golgi stack membrane. It is found in the secreted. The enzyme catalyses L-seryl-[protein] + UDP-N-acetyl-alpha-D-galactosamine = a 3-O-[N-acetyl-alpha-D-galactosaminyl]-L-seryl-[protein] + UDP + H(+). It carries out the reaction L-threonyl-[protein] + UDP-N-acetyl-alpha-D-galactosamine = a 3-O-[N-acetyl-alpha-D-galactosaminyl]-L-threonyl-[protein] + UDP + H(+). Its pathway is protein modification; protein glycosylation. In terms of biological role, catalyzes the initial reaction in O-linked oligosaccharide biosynthesis, the transfer of an N-acetyl-D-galactosamine residue to a serine or threonine residue on the protein receptor. Has a broad spectrum of substrates such as apomucin-, MUC5AC-, MUC1- and MUC2-derived peptides. In Sus scrofa (Pig), this protein is Polypeptide N-acetylgalactosaminyltransferase 1.